Reading from the N-terminus, the 117-residue chain is Large ribosomal subunit protein bL20 (117 aa).

It belongs to the bacterial ribosomal protein bL20 family.

Functionally, binds directly to 23S ribosomal RNA and is necessary for the in vitro assembly process of the 50S ribosomal subunit. It is not involved in the protein synthesizing functions of that subunit. The sequence is that of Large ribosomal subunit protein bL20 from Pelotomaculum thermopropionicum (strain DSM 13744 / JCM 10971 / SI).